A 357-amino-acid polypeptide reads, in one-letter code: DENN domain-containing protein 10 (357 aa).

One can recognise a uDENN domain in the interval 1–140; it reads MAAAEVADTQ…TKGICQSEEN (140 aa). The cDENN domain maps to 165 to 299; that stretch reads QFGMETVILH…PEKSESHVIQ (135 aa). The dDENN domain maps to 301–357; the sequence is IALKTREIFTNLAPFSEVSADGEKRVLNLEALKQKRFPPATENFLYHLAAAEQMLKI.

Belongs to the DENND10 family. As to quaternary structure, interacts with the coiled-coil heterodimer of CCDC22 and CCDC93; the interaction is direct. Interacts with RAB27A and RAB27B (GDP-bound forms preferentially).

The protein localises to the late endosome. In terms of biological role, guanine nucleotide exchange factor (GEF) regulating homeostasis of late endocytic pathway, including endosomal positioning, maturation and secretion, possibly through activating Rab proteins such as RAB27A and RAB27B. Promotes the exchange of GDP to GTP, converting inactive GDP-bound RAB27A and RAB27B into their active GTP-bound form. The polypeptide is DENN domain-containing protein 10 (Homo sapiens (Human)).